The following is a 77-amino-acid chain: Small ribosomal subunit protein bS21 (77 aa).

Over residues 38–52 the composition is skewed to basic and acidic residues; sequence KPSEKRAREKAEAIR. Residues 38–77 form a disordered region; sequence KPSEKRAREKAEAIRRTRKLARKRAQREGIVSNGRTASVR. A compositionally biased stretch (basic residues) spans 53–62; sequence RTRKLARKRA.

It belongs to the bacterial ribosomal protein bS21 family.

This is Small ribosomal subunit protein bS21 from Bartonella bacilliformis (strain ATCC 35685 / KC583 / Herrer 020/F12,63).